Reading from the N-terminus, the 249-residue chain is Type III pantothenate kinase (249 aa).

6–13 (DVGNTHTT) is a binding site for ATP. 101–104 (GADR) lines the substrate pocket. The Proton acceptor role is filled by aspartate 103. K(+) is bound at residue aspartate 123. Threonine 126 lines the ATP pocket. Threonine 177 is a binding site for substrate.

The protein belongs to the type III pantothenate kinase family. As to quaternary structure, homodimer. NH4(+) is required as a cofactor. K(+) serves as cofactor.

The protein resides in the cytoplasm. It catalyses the reaction (R)-pantothenate + ATP = (R)-4'-phosphopantothenate + ADP + H(+). The protein operates within cofactor biosynthesis; coenzyme A biosynthesis; CoA from (R)-pantothenate: step 1/5. Catalyzes the phosphorylation of pantothenate (Pan), the first step in CoA biosynthesis. This Thermosipho africanus (strain TCF52B) protein is Type III pantothenate kinase.